The primary structure comprises 217 residues: Peroxiredoxin (217 aa).

The Thioredoxin domain occupies 2-159; the sequence is PVIGEKFPEV…IVRLVKALQV (158 aa). Catalysis depends on cysteine 46, which acts as the Cysteine sulfenic acid (-SOH) intermediate. Arginine 122 contacts substrate. Cysteine 206 and cysteine 212 are disulfide-bonded.

It belongs to the peroxiredoxin family. Prx6 subfamily. Homodecamer. Pentamer of dimers that assemble into a ring structure.

It localises to the cytoplasm. The catalysed reaction is a hydroperoxide + [thioredoxin]-dithiol = an alcohol + [thioredoxin]-disulfide + H2O. Its function is as follows. Thiol-specific peroxidase that catalyzes the reduction of hydrogen peroxide and organic hydroperoxides to water and alcohols, respectively. Plays a role in cell protection against oxidative stress by detoxifying peroxides. This chain is Peroxiredoxin, found in Methanocaldococcus jannaschii (strain ATCC 43067 / DSM 2661 / JAL-1 / JCM 10045 / NBRC 100440) (Methanococcus jannaschii).